The following is a 212-amino-acid chain: Putative aryl-alcohol dehydrogenase AAD6 (212 aa).

Tyr-76 acts as the Proton donor in catalysis.

This sequence belongs to the aldo/keto reductase family. Aldo/keto reductase 2 subfamily.

This chain is Putative aryl-alcohol dehydrogenase AAD6, found in Saccharomyces cerevisiae (strain ATCC 204508 / S288c) (Baker's yeast).